A 689-amino-acid polypeptide reads, in one-letter code: Glycine--tRNA ligase beta subunit (689 aa).

This sequence belongs to the class-II aminoacyl-tRNA synthetase family. Tetramer of two alpha and two beta subunits.

The protein localises to the cytoplasm. The catalysed reaction is tRNA(Gly) + glycine + ATP = glycyl-tRNA(Gly) + AMP + diphosphate. The polypeptide is Glycine--tRNA ligase beta subunit (Shewanella piezotolerans (strain WP3 / JCM 13877)).